The sequence spans 560 residues: Putative transport protein VS_1837 (560 aa).

Transmembrane regions (helical) follow at residues Val5–Leu25, Leu37–Phe57, Phe66–Phe86, His91–Ser111, and Leu155–Ile175. RCK C-terminal domains lie at Arg203–Gly292 and Lys293–Phe376. 6 helical membrane passes run Leu386–Phe406, Val409–Leu429, Leu450–His470, Val478–Ala498, Ala506–Asn526, and Ala539–Ile559.

It belongs to the AAE transporter (TC 2.A.81) family. YbjL subfamily.

It localises to the cell membrane. This Vibrio atlanticus (strain LGP32) (Vibrio splendidus (strain Mel32)) protein is Putative transport protein VS_1837.